Here is a 794-residue protein sequence, read N- to C-terminus: Alpha-1,3-galactosidase B (794 aa).

Positions 1–57 are cleaved as a signal peptide; that stretch reads MEGNLSFSLMEASGRSIFFLIEGIREQSIKNMFSRMFSWSFVVAACLAGLFPAQSQG. 5 PbH1 repeats span residues 468 to 499, 609 to 631, 632 to 654, 665 to 686, and 707 to 728; these read SEDF…HFSN, YPSV…LFTT, PERV…LLAG, CHEV…YQFT, and HRNV…LFAI.

This sequence belongs to the glycosyl hydrolase 110 family. B subfamily.

The enzyme catalyses Hydrolysis of terminal, non-reducing branched (1-&gt;3)-alpha-D-galactosidic residues, producing free D-galactose.. It catalyses the reaction Hydrolysis of terminal, non-reducing linear (1-&gt;3)-alpha-D-galactosidic residues, producing free D-galactose.. It carries out the reaction Hydrolysis of terminal, non-reducing alpha-D-galactose residues in alpha-D-galactosides, including galactose oligosaccharides, galactomannans and galactolipids.. In terms of biological role, alpha-galactosidase. Removes both branched alpha-1,3-linked galactose residues of blood group B antigens and linear alpha-1,3-linked galactose structures. The polypeptide is Alpha-1,3-galactosidase B (glaB) (Akkermansia muciniphila (strain ATCC BAA-835 / DSM 22959 / JCM 33894 / BCRC 81048 / CCUG 64013 / CIP 107961 / Muc)).